The primary structure comprises 173 residues: RTX-III toxin-activating lysine-acyltransferase ApxIIC (173 aa).

Active-site residues include histidine 29 and aspartate 98.

It belongs to the RTX toxin acyltransferase family. Homodimer.

The protein resides in the cytoplasm. It catalyses the reaction a fatty acyl-[ACP] + L-lysyl-[protein] = N(6)-(fatty acyl)-L-lysyl-[protein] + holo-[ACP] + H(+). Its function is as follows. Protein-lysine acyltransferase that catalyzes fatty acylation of the protoxin, thereby converting it to the active toxin. The sequence is that of RTX-III toxin-activating lysine-acyltransferase ApxIIC (apxIIIC) from Actinobacillus pleuropneumoniae (Haemophilus pleuropneumoniae).